A 156-amino-acid polypeptide reads, in one-letter code: Ribosomal RNA large subunit methyltransferase H (156 aa).

Residues L73, G104, and 123–128 (LSALTL) each bind S-adenosyl-L-methionine.

Belongs to the RNA methyltransferase RlmH family. Homodimer.

It is found in the cytoplasm. The enzyme catalyses pseudouridine(1915) in 23S rRNA + S-adenosyl-L-methionine = N(3)-methylpseudouridine(1915) in 23S rRNA + S-adenosyl-L-homocysteine + H(+). Functionally, specifically methylates the pseudouridine at position 1915 (m3Psi1915) in 23S rRNA. The chain is Ribosomal RNA large subunit methyltransferase H from Shewanella piezotolerans (strain WP3 / JCM 13877).